The sequence spans 645 residues: 1,4-alpha-glucan branching enzyme GlgB (645 aa).

The active-site Nucleophile is Asp309. The Proton donor role is filled by Glu352. Residues 619-645 (VKTRKGSKKQDGSKTKVRSNVTSRGKR) are disordered. Residues 636–645 (RSNVTSRGKR) show a composition bias toward polar residues.

Belongs to the glycosyl hydrolase 13 family. GlgB subfamily. In terms of assembly, monomer.

It carries out the reaction Transfers a segment of a (1-&gt;4)-alpha-D-glucan chain to a primary hydroxy group in a similar glucan chain.. It participates in glycan biosynthesis; glycogen biosynthesis. Functionally, catalyzes the formation of the alpha-1,6-glucosidic linkages in glycogen by scission of a 1,4-alpha-linked oligosaccharide from growing alpha-1,4-glucan chains and the subsequent attachment of the oligosaccharide to the alpha-1,6 position. The chain is 1,4-alpha-glucan branching enzyme GlgB from Bacillus anthracis (strain CDC 684 / NRRL 3495).